A 611-amino-acid chain; its full sequence is Leukotriene A-4 hydrolase (611 aa).

An N6-acetyllysine modification is found at Lys73. Residues 135-137 (QCQ) and 267-272 (PYGGME) contribute to the a peptide site. Residue His296 coordinates Zn(2+). The Proton acceptor role is filled by Glu297. Zn(2+)-binding residues include His300 and Glu319. Lys337 is modified (N6-acetyllysine). Tyr384 (proton donor) is an active-site residue. Lys414 carries the post-translational modification N6-acetyllysine. A Phosphoserine modification is found at Ser416. 564 to 566 (RMK) is an a peptide binding site. Lys573 is modified (N6-acetyllysine).

Belongs to the peptidase M1 family. As to quaternary structure, monomer. Requires Zn(2+) as cofactor. Phosphorylation at Ser-416 inhibits leukotriene-A4 hydrolase activity.

The protein resides in the cytoplasm. The catalysed reaction is leukotriene A4 + H2O = leukotriene B4. The enzyme catalyses (5S,6S)-epoxy-(18R)-hydroxy-(7E,9E,11Z,14Z,16E)-eicosapentaenoate + H2O = resolvin E1. It carries out the reaction (5S,6S)-epoxy-(18S)-hydroxy-(7E,9E,11Z,14Z,16E)-eicosapentaenoate + H2O = 18S-resolvin E1. It catalyses the reaction Release of the N-terminal residue from a tripeptide.. It participates in lipid metabolism; leukotriene B4 biosynthesis. Its activity is regulated as follows. Inhibited by bestatin. The epoxide hydrolase activity is restrained by suicide inactivation that involves binding of LTA4 to Tyr-379. 4-(4-benzylphenyl)thiazol-2-amine (ARM1) selectively inhibits the epoxide hydrolase activity. Bifunctional zinc metalloenzyme that comprises both epoxide hydrolase (EH) and aminopeptidase activities. Acts as an epoxide hydrolase to catalyze the conversion of LTA4 to the pro-inflammatory mediator leukotriene B4 (LTB4). Also has aminopeptidase activity, with high affinity for N-terminal arginines of various synthetic tripeptides. In addition to its pro-inflammatory EH activity, may also counteract inflammation by its aminopeptidase activity, which inactivates by cleavage another neutrophil attractant, the tripeptide Pro-Gly-Pro (PGP), a bioactive fragment of collagen generated by the action of matrix metalloproteinase-9 (MMP9) and prolylendopeptidase (PREPL). Involved also in the biosynthesis of resolvin E1 and 18S-resolvin E1 from eicosapentaenoic acid, two lipid mediators that show potent anti-inflammatory and pro-resolving actions. This Mus musculus (Mouse) protein is Leukotriene A-4 hydrolase (Lta4h).